Here is a 78-residue protein sequence, read N- to C-terminus: Small integral membrane protein 1 (78 aa).

Met-1 is modified (N-acetylmethionine). Basic and acidic residues predominate over residues 1–18 (MQPQESHVHYSRWEDGSR). Positions 1 to 20 (MQPQESHVHYSRWEDGSRDG) are disordered. Topologically, residues 1-46 (MQPQESHVHYSRWEDGSRDGVSLGAVSSTEEASRCRRISQRLCTGK) are cytoplasmic. Phosphoserine occurs at positions 6, 17, 22, and 27. The helical; Signal-anchor for type II membrane protein transmembrane segment at 47-67 (LGIAMKVLGGVALFWIIFILG) threads the bilayer. At 68 to 78 (YLTGYYVHKCK) the chain is on the extracellular side. Residues 68–78 (YLTGYYVHKCK) are displays the Vel antigen.

Belongs to the SMIM1 family. Homooligomer; disulfide-linked. In terms of tissue distribution, highly expressed in the bone marrow and expressed at lower levels in non-hematopoietic tissues. Highly expressed in erythroleukemia cell lines. Up-regulated in CD34+ hematopoietic progenitors cultured toward red blood cells.

The protein localises to the cell membrane. Its function is as follows. Regulator of red blood cell formation. The protein is Small integral membrane protein 1 of Homo sapiens (Human).